Reading from the N-terminus, the 92-residue chain is Small ribosomal subunit protein uS19 (92 aa).

The protein belongs to the universal ribosomal protein uS19 family.

Functionally, protein S19 forms a complex with S13 that binds strongly to the 16S ribosomal RNA. The polypeptide is Small ribosomal subunit protein uS19 (Paracidovorax citrulli (strain AAC00-1) (Acidovorax citrulli)).